Reading from the N-terminus, the 407-residue chain is Phosphopentomutase (407 aa).

Mn(2+)-binding residues include aspartate 10, aspartate 306, histidine 311, aspartate 347, histidine 348, and histidine 359.

This sequence belongs to the phosphopentomutase family. Mn(2+) serves as cofactor.

The protein localises to the cytoplasm. It carries out the reaction 2-deoxy-alpha-D-ribose 1-phosphate = 2-deoxy-D-ribose 5-phosphate. The catalysed reaction is alpha-D-ribose 1-phosphate = D-ribose 5-phosphate. It participates in carbohydrate degradation; 2-deoxy-D-ribose 1-phosphate degradation; D-glyceraldehyde 3-phosphate and acetaldehyde from 2-deoxy-alpha-D-ribose 1-phosphate: step 1/2. Isomerase that catalyzes the conversion of deoxy-ribose 1-phosphate (dRib-1-P) and ribose 1-phosphate (Rib-1-P) to deoxy-ribose 5-phosphate (dRib-5-P) and ribose 5-phosphate (Rib-5-P), respectively. This is Phosphopentomutase from Yersinia pestis bv. Antiqua (strain Angola).